The primary structure comprises 152 residues: uncharacterized protein (152 aa).

3 helical membrane passes run 13 to 33, 38 to 58, and 69 to 89; these read LLWF…LLFF, LIVE…SLFM, and WVIF…FFVI.

The protein localises to the cell membrane. This is an uncharacterized protein from Mycoplasma pneumoniae (strain ATCC 29342 / M129 / Subtype 1) (Mycoplasmoides pneumoniae).